A 207-amino-acid chain; its full sequence is MSLVTTINWEKVDGLVPAVIQDNTSGQVLMLGYMNKEALNKTLETKQVTFWSRTKERLWTKGETSGNVLELKSINLDCDQDTLLVKVNPVGPTCHLGTPTCFDNDAEGKQEQPALVFLHQLEQVLANRKGADPESSYTASLYARGTKRISQKVGEEGVEVALAATSGDKAELVCESADLIYHLIVLLQDQGLSLSDVTEKLQERHNK.

The phosphoribosyl-AMP cyclohydrolase stretch occupies residues 1 to 117 (MSLVTTINWE…GKQEQPALVF (117 aa)). The interval 118 to 207 (LHQLEQVLAN…TEKLQERHNK (90 aa)) is phosphoribosyl-ATP pyrophosphohydrolase.

It in the N-terminal section; belongs to the PRA-CH family. The protein in the C-terminal section; belongs to the PRA-PH family.

It is found in the cytoplasm. It carries out the reaction 1-(5-phospho-beta-D-ribosyl)-ATP + H2O = 1-(5-phospho-beta-D-ribosyl)-5'-AMP + diphosphate + H(+). The catalysed reaction is 1-(5-phospho-beta-D-ribosyl)-5'-AMP + H2O = 1-(5-phospho-beta-D-ribosyl)-5-[(5-phospho-beta-D-ribosylamino)methylideneamino]imidazole-4-carboxamide. The protein operates within amino-acid biosynthesis; L-histidine biosynthesis; L-histidine from 5-phospho-alpha-D-ribose 1-diphosphate: step 2/9. Its pathway is amino-acid biosynthesis; L-histidine biosynthesis; L-histidine from 5-phospho-alpha-D-ribose 1-diphosphate: step 3/9. The sequence is that of Histidine biosynthesis bifunctional protein HisIE from Photobacterium profundum (strain SS9).